Here is a 308-residue protein sequence, read N- to C-terminus: Porphobilinogen deaminase (308 aa).

The residue at position 240 (Cys240) is an S-(dipyrrolylmethanemethyl)cysteine.

It belongs to the HMBS family. In terms of assembly, monomer. It depends on dipyrromethane as a cofactor.

The catalysed reaction is 4 porphobilinogen + H2O = hydroxymethylbilane + 4 NH4(+). It participates in porphyrin-containing compound metabolism; protoporphyrin-IX biosynthesis; coproporphyrinogen-III from 5-aminolevulinate: step 2/4. Its function is as follows. Tetrapolymerization of the monopyrrole PBG into the hydroxymethylbilane pre-uroporphyrinogen in several discrete steps. The protein is Porphobilinogen deaminase of Maridesulfovibrio salexigens (strain ATCC 14822 / DSM 2638 / NCIMB 8403 / VKM B-1763) (Desulfovibrio salexigens).